We begin with the raw amino-acid sequence, 201 residues long: Small ribosomal subunit protein uS4 (201 aa).

One can recognise an S4 RNA-binding domain in the interval 103–167 (RRLQTIVTKK…SKIPQVLEKT (65 aa)). Residues 163–201 (VLEKTKSEAPAEETVEAPAEETVEAPAEEKKEESPSTES) are disordered. The segment covering 172 to 185 (PAEETVEAPAEETV) has biased composition (acidic residues). A compositionally biased stretch (basic and acidic residues) spans 189–201 (AEEKKEESPSTES).

The protein belongs to the universal ribosomal protein uS4 family. In terms of assembly, part of the 30S ribosomal subunit. Contacts protein S5. The interaction surface between S4 and S5 is involved in control of translational fidelity.

Functionally, one of the primary rRNA binding proteins, it binds directly to 16S rRNA where it nucleates assembly of the body of the 30S subunit. With S5 and S12 plays an important role in translational accuracy. In Nitrosopumilus maritimus (strain SCM1), this protein is Small ribosomal subunit protein uS4.